The sequence spans 435 residues: Methylenetetrahydrofolate--tRNA-(uracil-5-)-methyltransferase TrmFO (435 aa).

9–14 (GAGLAG) contributes to the FAD binding site.

Belongs to the MnmG family. TrmFO subfamily. FAD serves as cofactor.

It localises to the cytoplasm. It catalyses the reaction uridine(54) in tRNA + (6R)-5,10-methylene-5,6,7,8-tetrahydrofolate + NADH + H(+) = 5-methyluridine(54) in tRNA + (6S)-5,6,7,8-tetrahydrofolate + NAD(+). The catalysed reaction is uridine(54) in tRNA + (6R)-5,10-methylene-5,6,7,8-tetrahydrofolate + NADPH + H(+) = 5-methyluridine(54) in tRNA + (6S)-5,6,7,8-tetrahydrofolate + NADP(+). Its function is as follows. Catalyzes the folate-dependent formation of 5-methyl-uridine at position 54 (M-5-U54) in all tRNAs. The sequence is that of Methylenetetrahydrofolate--tRNA-(uracil-5-)-methyltransferase TrmFO from Staphylococcus aureus (strain MRSA252).